The sequence spans 94 residues: MSIDFVVHDADDAVGVVVVEGVEAGQMLTGWVMDQDRTLQFEVKDAIPIGHKLAIRDLAEDETVIKYSVDIGRVVQSIRQGEHVHVHNVKTKRW.

Residues 16–90 form the AFP-like domain; sequence VVVVEGVEAG…GEHVHVHNVK (75 aa).

In terms of assembly, (2R)-sulfolactate sulfo-lyase is composed of a SuyA and a SuyB subunit.

The protein resides in the cytoplasm. The catalysed reaction is (2R)-3-sulfolactate = sulfite + pyruvate + H(+). Its function is as follows. Together with SuyB, desulfonates sulfolactate to pyruvate and sulfite. In Chromohalobacter salexigens (strain ATCC BAA-138 / DSM 3043 / CIP 106854 / NCIMB 13768 / 1H11), this protein is (2R)-sulfolactate sulfo-lyase subunit alpha (suyA).